Consider the following 195-residue polypeptide: Holliday junction branch migration complex subunit RuvA (195 aa).

The tract at residues 1–63 (MIASVRGEVL…EDSQTLYGFA (63 aa)) is domain I. A domain II region spans residues 64–138 (DSDARDLFLT…DKVGSSTSSG (75 aa)). The interval 138-142 (GVAAA) is flexible linker. The interval 143-195 (GGHGIRGPVVEALVGLGFAVKQAEEATDKVLANDPEATTSSALRAALSMLGKK) is domain III.

This sequence belongs to the RuvA family. In terms of assembly, homotetramer. Forms an RuvA(8)-RuvB(12)-Holliday junction (HJ) complex. HJ DNA is sandwiched between 2 RuvA tetramers; dsDNA enters through RuvA and exits via RuvB. An RuvB hexamer assembles on each DNA strand where it exits the tetramer. Each RuvB hexamer is contacted by two RuvA subunits (via domain III) on 2 adjacent RuvB subunits; this complex drives branch migration. In the full resolvosome a probable DNA-RuvA(4)-RuvB(12)-RuvC(2) complex forms which resolves the HJ.

It localises to the cytoplasm. Functionally, the RuvA-RuvB-RuvC complex processes Holliday junction (HJ) DNA during genetic recombination and DNA repair, while the RuvA-RuvB complex plays an important role in the rescue of blocked DNA replication forks via replication fork reversal (RFR). RuvA specifically binds to HJ cruciform DNA, conferring on it an open structure. The RuvB hexamer acts as an ATP-dependent pump, pulling dsDNA into and through the RuvAB complex. HJ branch migration allows RuvC to scan DNA until it finds its consensus sequence, where it cleaves and resolves the cruciform DNA. This chain is Holliday junction branch migration complex subunit RuvA, found in Mycolicibacterium gilvum (strain PYR-GCK) (Mycobacterium gilvum (strain PYR-GCK)).